Reading from the N-terminus, the 356-residue chain is Peptide chain release factor 1 (356 aa).

Gln233 is subject to N5-methylglutamine.

It belongs to the prokaryotic/mitochondrial release factor family. Post-translationally, methylated by PrmC. Methylation increases the termination efficiency of RF1.

It is found in the cytoplasm. Functionally, peptide chain release factor 1 directs the termination of translation in response to the peptide chain termination codons UAG and UAA. In Oceanobacillus iheyensis (strain DSM 14371 / CIP 107618 / JCM 11309 / KCTC 3954 / HTE831), this protein is Peptide chain release factor 1.